We begin with the raw amino-acid sequence, 259 residues long: Small ribosomal subunit protein uS7m (259 aa).

The N-terminal 39 residues, 1-39 (MLRLIKQPLFRCASSGHLMKESLVFIHQTRTFQVGKFTS), are a transit peptide targeting the mitochondrion. Thr-157 is subject to Phosphothreonine.

This sequence belongs to the universal ribosomal protein uS7 family. In terms of assembly, component of the mitochondrial small ribosomal subunit (mt-SSU). Mature yeast 74S mitochondrial ribosomes consist of a small (37S) and a large (54S) subunit. The 37S small subunit contains a 15S ribosomal RNA (15S mt-rRNA) and at least 32 different proteins. The 54S large subunit contains a 21S rRNA (21S mt-rRNA) and at least 45 different proteins.

The protein localises to the mitochondrion. In terms of biological role, component of the mitochondrial ribosome (mitoribosome), a dedicated translation machinery responsible for the synthesis of mitochondrial genome-encoded proteins, including at least some of the essential transmembrane subunits of the mitochondrial respiratory chain. The mitoribosomes are attached to the mitochondrial inner membrane and translation products are cotranslationally integrated into the membrane. This is Small ribosomal subunit protein uS7m (rsm7) from Schizosaccharomyces pombe (strain 972 / ATCC 24843) (Fission yeast).